The chain runs to 716 residues: MIYQSPTIQVELLEDNIAKLCFNAPGSVNKFDRETLASLDAALDSIKQDSNIKALVLTSSKDTFIVGADITEFLGLFAQDDAVLLSWVEQANAVFNKLEDLPFPTASAIKGFALGGGCETILATDFRVADTTAKIGLPETKLGIIPGFGGTVRLPRVIGADNALEWITTGKDQRAEDALKVGAVDAVVAPQALEAAAIQMLKDAVAEKLDWQARRNRKLSALTLPKLEAMMSFTTAKGMVFAVAGKHYPAPMAAVSVIEQASTKGRAEALQIEHQAFIKLAKTDVAKALIGIFLNDQFVKGKAKKAGKLAKEVNNAAVLGAGIMGGGIAYQSASKGTPIVMKDIAQPALDLGLNEAAKLLSAQVARGRSTPEKMAKVLNNITPSLDYAAIKHSDVVVEAVVEHPKIKAQVLAEVEGYVSEDAIIASNTSTISINLLAKSMKKPERFCGMHFFNPVHKMPLVEVIRGEHSSEETIASVVAYASKMGKTPIVVNDCPGFFVNRVLFPYFAGFNGLLAEGGDFAAIDKVMEKQFGWPMGPAYLLDVVGLDTGHHAQAVMAEGFPDRMGKSGTDAIDVMFENKRLGQKNGKGFYVYSVDSRGKPKKDVDPTSYGLLKDAFGELKAFEADDIIARTMIPMIIETVRCLEEGIVASPAEADMGLVYGLGFPPFRGGVFRYLDTMGVANFVALADKYAHLGGLYQVTDAMRTLAANNGSYYQA.

Positions 1 to 189 are enoyl-CoA hydratase/isomerase; that stretch reads MIYQSPTIQV…KVGAVDAVVA (189 aa). Asp-296 contributes to the substrate binding site. The 3-hydroxyacyl-CoA dehydrogenase stretch occupies residues 311–716; the sequence is KEVNNAAVLG…AANNGSYYQA (406 aa). NAD(+) is bound by residues Met-324, Asp-343, 400 to 402, Lys-407, and Ser-429; that span reads VVE. The For 3-hydroxyacyl-CoA dehydrogenase activity role is filled by His-450. Residue Asn-453 participates in NAD(+) binding. Residues Asn-500 and Tyr-660 each contribute to the substrate site.

This sequence in the N-terminal section; belongs to the enoyl-CoA hydratase/isomerase family. It in the C-terminal section; belongs to the 3-hydroxyacyl-CoA dehydrogenase family. As to quaternary structure, heterotetramer of two alpha chains (FadB) and two beta chains (FadA).

The enzyme catalyses a (3S)-3-hydroxyacyl-CoA + NAD(+) = a 3-oxoacyl-CoA + NADH + H(+). It catalyses the reaction a (3S)-3-hydroxyacyl-CoA = a (2E)-enoyl-CoA + H2O. The catalysed reaction is a 4-saturated-(3S)-3-hydroxyacyl-CoA = a (3E)-enoyl-CoA + H2O. It carries out the reaction (3S)-3-hydroxybutanoyl-CoA = (3R)-3-hydroxybutanoyl-CoA. The enzyme catalyses a (3Z)-enoyl-CoA = a 4-saturated (2E)-enoyl-CoA. It catalyses the reaction a (3E)-enoyl-CoA = a 4-saturated (2E)-enoyl-CoA. It participates in lipid metabolism; fatty acid beta-oxidation. Involved in the aerobic and anaerobic degradation of long-chain fatty acids via beta-oxidation cycle. Catalyzes the formation of 3-oxoacyl-CoA from enoyl-CoA via L-3-hydroxyacyl-CoA. It can also use D-3-hydroxyacyl-CoA and cis-3-enoyl-CoA as substrate. This chain is Fatty acid oxidation complex subunit alpha, found in Shewanella baltica (strain OS195).